The primary structure comprises 1984 residues: Sodium channel protein type 9 subunit alpha (1984 aa).

Residues Met1 to His125 are Cytoplasmic-facing. The segment covering Arg26–Pro47 has biased composition (basic and acidic residues). Residues Arg26–Ala55 form a disordered region. The I repeat unit spans residues Phe112 to Gln408. The helical transmembrane segment at Ser126–Met145 threads the bilayer. The Extracellular portion of the chain corresponds to Asn146 to Glu150. Residues Trp151 to Phe172 form a helical membrane-spanning segment. The Cytoplasmic segment spans residues Ala173 to Arg185. The chain crosses the membrane as a helical span at residues Asp186–Phe204. Topologically, residues Val205–Val210 are extracellular. Asn209 carries an N-linked (GlcNAc...) asparagine glycan. Residues Ser211–Val227 traverse the membrane as a helical segment. Over Ile228–Ser241 the chain is Cytoplasmic. The chain crosses the membrane as a helical span at residues Val242 to Phe267. Topologically, residues Met268–Thr344 are extracellular. Cys275 and Cys322 are oxidised to a cystine. An N-linked (GlcNAc...) asparagine glycan is attached at Asn281. An intramembrane region (pore-forming) is located at residues Phe345–Trp361. At Glu362–Lys374 the chain is on the extracellular side. Residues Thr375–Ala400 traverse the membrane as a helical segment. At Met401–Phe742 the chain is on the cytoplasmic side. Low complexity predominate over residues Ser459–Lys469. 2 disordered regions span residues Ser459–Glu517 and Gly563–Leu610. The segment covering Lys472–Lys484 has biased composition (basic residues). Basic and acidic residues-rich tracts occupy residues Ser487–Ser508 and Asp571–Arg583. An II repeat occupies Cys723 to Gln986. Residues Val743–Ala759 form a helical membrane-spanning segment. Residues Met760–Glu768 are Extracellular-facing. The helical transmembrane segment at Phe769–Ile793 threads the bilayer. Over Ala794 to Gln802 the chain is Cytoplasmic. Residues Val803–Glu819 traverse the membrane as a helical segment. Over Leu820 to Leu828 the chain is Extracellular. A helical membrane pass occupies residues Ser829 to Ser845. Topologically, residues Trp846–Pro862 are cytoplasmic. Residues Leu863–Phe885 form a helical membrane-spanning segment. Residues Gly886–His912 lie on the Extracellular side of the membrane. Cys894 and Cys900 are oxidised to a cystine. Positions Ser913–Trp925 form an intramembrane region, pore-forming. At Ile926–Gly937 the chain is on the extracellular side. An intrachain disulfide couples Cys932 to Cys941. The helical transmembrane segment at Gln938 to Leu964 threads the bilayer. Residues Leu965 to Arg1184 lie on the Cytoplasmic side of the membrane. The tract at residues Pro1087–Asp1146 is disordered. Residues Arg1118 to Asp1128 are compositionally biased toward polar residues. A compositionally biased stretch (acidic residues) spans Glu1134–Asp1146. One copy of the III repeat lies at Asn1177–Leu1485. A helical membrane pass occupies residues Ile1185 to Glu1209. Topologically, residues Asp1210–Ile1221 are extracellular. A helical transmembrane segment spans residues Ile1222 to Tyr1247. The Cytoplasmic portion of the chain corresponds to Lys1248–Thr1249. The helical transmembrane segment at Tyr1250–Leu1275 threads the bilayer. Residues Gly1276–Lys1284 are Extracellular-facing. Residues Ser1285 to Phe1301 traverse the membrane as a helical segment. The Cytoplasmic portion of the chain corresponds to Glu1302–Ala1314. A helical transmembrane segment spans residues Ile1315–Leu1339. Over Phe1340–Leu1391 the chain is Extracellular. A disulfide bond links Cys1347 and Cys1367. Asn1349, Asn1363, and Asn1372 each carry an N-linked (GlcNAc...) asparagine glycan. Residues Arg1392–Phe1402 constitute an intramembrane region (pore-forming). Topologically, residues Lys1403–Leu1428 are extracellular. Residues Tyr1429–Ile1454 traverse the membrane as a helical segment. Residues Asp1455–Asn1511 lie on the Cytoplasmic side of the membrane. Ser1487 bears the Phosphoserine; by PKC mark. One copy of the IV repeat lies at Ile1494 to Gln1792. The chain crosses the membrane as a helical span at residues Gln1512–Val1531. Topologically, residues Glu1532–Asp1542 are extracellular. The helical transmembrane segment at Val1543–Ile1564 threads the bilayer. The Cytoplasmic segment spans residues Ser1565–Ile1573. Residues Gly1574–Leu1595 traverse the membrane as a helical segment. Over Ile1596–Thr1604 the chain is Extracellular. The chain crosses the membrane as a helical span at residues Leu1605–Ala1624. At Lys1625–Ser1637 the chain is on the cytoplasmic side. A helical transmembrane segment spans residues Leu1638–Met1660. Over Ser1661–Asn1683 the chain is Extracellular. An intramembrane region (pore-forming) is located at residues Ser1684 to Gly1696. At Trp1697 to Pro1730 the chain is on the extracellular side. Cys1712 and Cys1727 are joined by a disulfide. The helical transmembrane segment at Ser1731–Ile1756 threads the bilayer. The Cytoplasmic portion of the chain corresponds to Leu1757–Lys1984. Positions Glu1886–Lys1915 constitute an IQ domain. The interval Pro1924–Lys1984 is disordered. Residues Asn1933–Ser1956 show a composition bias toward polar residues. A compositionally biased stretch (basic and acidic residues) spans Thr1958–Lys1984.

The protein belongs to the sodium channel (TC 1.A.1.10) family. Nav1.7/SCN9A subfamily. The Nav1.7 voltage-gated sodium channel consists of an ion-conducting alpha subunit SCN9A which is functional on its own regulated by one or more beta-1 (SCN1B), beta-2 (SCN2B), beta-3 (SCN3B) and beta-4 (SCN4B) subunits. SCN1B and SCN3B are non-covalently associated with SCN9A. SCN2B and SCN4B are disulfide-linked to SCN9A. SCN1B regulates channel inactivation. Interacts with NEDD4 and NEDD4L; regulates Nav1.7 activity most probably through ubiquitination and subsequent endocytosis. Interacts with TMEM233; modulates the gating properties of NaV1.7. Post-translationally, phosphorylation at Ser-1487 by PKC in a highly conserved cytoplasmic loop increases peak sodium currents. In terms of processing, ubiquitinated by NEDD4L; which may promote its endocytosis. In terms of tissue distribution, expressed in the sciatic nerve, spinal cord, brainstem, cerebellum and cortex, but not expressed in the lung, skeletal and cardiac muscles, kidney and liver.

It is found in the cell membrane. Its subcellular location is the cell projection. The protein resides in the neuron projection. It localises to the axon. The catalysed reaction is Na(+)(in) = Na(+)(out). Functionally, pore-forming subunit of Nav1.7, a voltage-gated sodium (Nav) channel that directly mediates the depolarizing phase of action potentials in excitable membranes. Navs, also called VGSCs (voltage-gated sodium channels) or VDSCs (voltage-dependent sodium channels), operate by switching between closed and open conformations depending on the voltage difference across the membrane. In the open conformation they allow Na(+) ions to selectively pass through the pore, along their electrochemical gradient. The influx of Na(+) ions provokes membrane depolarization, initiating the propagation of electrical signals throughout cells and tissues. Nav1.7 plays a crucial role in controlling the excitability and action potential propagation from nociceptor neurons, thereby contributing to the sensory perception of pain. In Oryctolagus cuniculus (Rabbit), this protein is Sodium channel protein type 9 subunit alpha.